The chain runs to 79 residues: Major outer membrane lipoprotein Lpp 3 (79 aa).

The first 21 residues, 1–21 (MNRTNKLILGAVVLGSALLAG), serve as a signal peptide directing secretion. A lipid anchor (N-palmitoyl cysteine) is attached at C22. C22 carries the S-diacylglycerol cysteine lipid modification. Repeats lie at residues 25–35 (NAKIDQLSSDV) and 39–49 (SAKVDQLSNDV). The stretch at 28–76 (IDQLSSDVQTLSAKVDQLSNDVNAMRSDVQAAKDDAARANQRLDNKVLR) forms a coiled coil. N6-murein peptidoglycan lysine is present on K79.

Belongs to the Lpp family. As to quaternary structure, homotrimer.

The protein localises to the cell outer membrane. The protein resides in the secreted. It localises to the cell wall. Its function is as follows. A highly abundant outer membrane lipoprotein that controls the distance between the inner and outer membranes. The only protein known to be covalently linked to the peptidoglycan network (PGN). Also non-covalently binds the PGN. The link between the cell outer membrane and PGN contributes to maintenance of the structural and functional integrity of the cell envelope, and maintains the correct distance between the PGN and the outer membrane. This is Major outer membrane lipoprotein Lpp 3 from Salmonella paratyphi A (strain ATCC 9150 / SARB42).